We begin with the raw amino-acid sequence, 276 residues long: Light-independent protochlorophyllide reductase iron-sulfur ATP-binding protein (276 aa).

ATP contacts are provided by residues 12 to 17 and Lys-41; that span reads GIGKST. Ser-16 is a binding site for Mg(2+). [4Fe-4S] cluster-binding residues include Cys-97 and Cys-131. Residue 182 to 183 coordinates ATP; it reads NR.

Belongs to the NifH/BchL/ChlL family. As to quaternary structure, homodimer. Protochlorophyllide reductase is composed of three subunits; BchL, BchN and BchB. Requires [4Fe-4S] cluster as cofactor.

The enzyme catalyses chlorophyllide a + oxidized 2[4Fe-4S]-[ferredoxin] + 2 ADP + 2 phosphate = protochlorophyllide a + reduced 2[4Fe-4S]-[ferredoxin] + 2 ATP + 2 H2O. It functions in the pathway porphyrin-containing compound metabolism; bacteriochlorophyll biosynthesis (light-independent). Component of the dark-operative protochlorophyllide reductase (DPOR) that uses Mg-ATP and reduced ferredoxin to reduce ring D of protochlorophyllide (Pchlide) to form chlorophyllide a (Chlide). This reaction is light-independent. The L component serves as a unique electron donor to the NB-component of the complex, and binds Mg-ATP. This Chlorobium chlorochromatii (strain CaD3) protein is Light-independent protochlorophyllide reductase iron-sulfur ATP-binding protein.